The chain runs to 38 residues: Photosystem II reaction center protein Y (38 aa).

Over 1 to 4 (MSMR) the chain is Lumenal. Residues 5–23 (LVVVLLPLGIALGWAVYNI) traverse the membrane as a helical segment. Residues 24–38 (GKLAIEQWRRTGSKV) are Stromal-facing.

This sequence belongs to the PsbY family. As to quaternary structure, PSII is composed of 1 copy each of membrane proteins PsbA, PsbB, PsbC, PsbD, PsbE, PsbF, PsbH, PsbI, PsbJ, PsbK, PsbL, PsbM, PsbT, PsbX, PsbY, PsbZ, Psb30/Ycf12, at least 3 peripheral proteins of the oxygen-evolving complex and a large number of cofactors. It forms dimeric complexes.

The protein resides in the plastid. It localises to the cyanelle thylakoid membrane. Functionally, loosely associated component of the core of photosystem II (PSII), it is not always seen in crystals. PSII is a light-driven water plastoquinone oxidoreductase, using light energy to abstract electrons from H(2)O, generating a proton gradient subsequently used for ATP formation. The chain is Photosystem II reaction center protein Y from Cyanophora paradoxa.